Here is a 376-residue protein sequence, read N- to C-terminus: UPF0754 membrane protein BLi01057/BL02871 (376 aa).

2 helical membrane passes run Met-1–Thr-21 and Tyr-356–Ile-376.

Belongs to the UPF0754 family.

The protein resides in the cell membrane. In Bacillus licheniformis (strain ATCC 14580 / DSM 13 / JCM 2505 / CCUG 7422 / NBRC 12200 / NCIMB 9375 / NCTC 10341 / NRRL NRS-1264 / Gibson 46), this protein is UPF0754 membrane protein BLi01057/BL02871.